The chain runs to 221 residues: Endonuclease V (221 aa).

Residues Asp43 and Asp109 each coordinate Mg(2+).

This sequence belongs to the endonuclease V family. The cofactor is Mg(2+).

It localises to the cytoplasm. The catalysed reaction is Endonucleolytic cleavage at apurinic or apyrimidinic sites to products with a 5'-phosphate.. Its function is as follows. DNA repair enzyme involved in the repair of deaminated bases. Selectively cleaves double-stranded DNA at the second phosphodiester bond 3' to a deoxyinosine leaving behind the intact lesion on the nicked DNA. The chain is Endonuclease V from Petrotoga mobilis (strain DSM 10674 / SJ95).